Here is a 122-residue protein sequence, read N- to C-terminus: Putative syntaxin 6 (122 aa).

The Cytoplasmic portion of the chain corresponds to 1–100 (MSNYRYSKLN…AKLTHLEDES (100 aa)). The t-SNARE coiled-coil homology domain occupies 31–93 (EQIIQEQDDE…DTAMKKMAKL (63 aa)). Residues 101–121 (SQCKMIMVLSALLFFLVFVLL) traverse the membrane as a helical; Anchor for type IV membrane protein segment. Position 122 (valine 122) is a topological domain, extracellular.

The protein belongs to the syntaxin family.

The protein resides in the membrane. In terms of biological role, SNARE promoting movement of transport vesicles to target membranes. Potentially functions in retrograde trafficking and in the endocytic recycling pathway. This Caenorhabditis elegans protein is Putative syntaxin 6 (syx-6).